A 388-amino-acid chain; its full sequence is GTPase Obg (388 aa).

Positions Ser-4–Leu-162 constitute an Obg domain. The OBG-type G domain occupies Ala-163–Asn-329. GTP is bound by residues Gly-169–Ser-176, Phe-194–Glu-198, Asp-216–Gly-219, Thr-283–Asp-286, and Ser-310–Val-312. Residues Ser-176 and Thr-196 each contribute to the Mg(2+) site. The segment at Leu-352–Lys-388 is disordered. Positions Gly-356–Lys-388 are enriched in acidic residues.

Belongs to the TRAFAC class OBG-HflX-like GTPase superfamily. OBG GTPase family. As to quaternary structure, monomer. Mg(2+) serves as cofactor.

It localises to the cytoplasm. In terms of biological role, an essential GTPase which binds GTP, GDP and possibly (p)ppGpp with moderate affinity, with high nucleotide exchange rates and a fairly low GTP hydrolysis rate. Plays a role in control of the cell cycle, stress response, ribosome biogenesis and in those bacteria that undergo differentiation, in morphogenesis control. The polypeptide is GTPase Obg (Bacteroides thetaiotaomicron (strain ATCC 29148 / DSM 2079 / JCM 5827 / CCUG 10774 / NCTC 10582 / VPI-5482 / E50)).